The sequence spans 471 residues: A-type ATP synthase subunit B (471 aa).

The protein belongs to the ATPase alpha/beta chains family. As to quaternary structure, has multiple subunits with at least A(3), B(3), C, D, E, F, H, I and proteolipid K(x).

It localises to the cell membrane. Component of the A-type ATP synthase that produces ATP from ADP in the presence of a proton gradient across the membrane. The B chain is a regulatory subunit. This is A-type ATP synthase subunit B from Natronomonas pharaonis (strain ATCC 35678 / DSM 2160 / CIP 103997 / JCM 8858 / NBRC 14720 / NCIMB 2260 / Gabara) (Halobacterium pharaonis).